The chain runs to 833 residues: Probable glucan 1,3-beta-glucosidase D (833 aa).

The span at 1–33 (MPTHSRSRDRYGGRDSDREARYDYDYARRRYAT) shows a compositional bias: basic and acidic residues. The tract at residues 1–228 (MPTHSRSRDR…RKRQKKLAVV (228 aa)) is disordered. Residues 1-305 (MPTHSRSRDR…GGRPFWKRKR (305 aa)) lie on the Cytoplasmic side of the membrane. A compositionally biased stretch (acidic residues) spans 34–45 (DDDDDYDDDELE). 2 stretches are compositionally biased toward basic and acidic residues: residues 46–75 (HDLTERRYRRDGYRPPRESRARGYYERDAE) and 97–172 (YGDD…ETAA). Low complexity predominate over residues 183–196 (SASHLLSADALAKL). Basic and acidic residues predominate over residues 200-217 (YEKEERRKREIAKDAAKA). The chain crosses the membrane as a helical; Signal-anchor for type II membrane protein span at residues 306-326 (WIGLGALIIILVIVIPVAVVV). Residues 327-833 (SKKHDNKSDP…PDFGDLPEYY (507 aa)) are Extracellular-facing. The interval 331 to 353 (DNKSDPADSQGTSPGKSNLDGLS) is disordered. An N-linked (GlcNAc...) asparagine glycan is attached at N332. A compositionally biased stretch (polar residues) spans 337–346 (ADSQGTSPGK). N-linked (GlcNAc...) asparagine glycans are attached at residues N378, N383, N395, N548, N560, and N569. E599 serves as the catalytic Proton donor. Residues N638, N671, and N691 are each glycosylated (N-linked (GlcNAc...) asparagine). E704 (nucleophile) is an active-site residue.

This sequence belongs to the glycosyl hydrolase 5 (cellulase A) family.

It is found in the cell membrane. The enzyme catalyses Successive hydrolysis of beta-D-glucose units from the non-reducing ends of (1-&gt;3)-beta-D-glucans, releasing alpha-glucose.. Functionally, glucosidase involved in the degradation of cellulosic biomass. Active on lichenan. In Aspergillus fumigatus (strain CBS 144.89 / FGSC A1163 / CEA10) (Neosartorya fumigata), this protein is Probable glucan 1,3-beta-glucosidase D (exgD).